The following is a 968-amino-acid chain: Isoleucine--tRNA ligase (968 aa).

Positions 68–78 (PYANGALHMGH) match the 'HIGH' region motif. Glu-582 serves as a coordination point for L-isoleucyl-5'-AMP. A 'KMSKS' region motif is present at residues 623–627 (KMSKS). Lys-626 contributes to the ATP binding site. Cys-936, Cys-939, Cys-956, and Cys-959 together coordinate Zn(2+).

It belongs to the class-I aminoacyl-tRNA synthetase family. IleS type 1 subfamily. As to quaternary structure, monomer. Requires Zn(2+) as cofactor.

It localises to the cytoplasm. The catalysed reaction is tRNA(Ile) + L-isoleucine + ATP = L-isoleucyl-tRNA(Ile) + AMP + diphosphate. Its function is as follows. Catalyzes the attachment of isoleucine to tRNA(Ile). As IleRS can inadvertently accommodate and process structurally similar amino acids such as valine, to avoid such errors it has two additional distinct tRNA(Ile)-dependent editing activities. One activity is designated as 'pretransfer' editing and involves the hydrolysis of activated Val-AMP. The other activity is designated 'posttransfer' editing and involves deacylation of mischarged Val-tRNA(Ile). In Prochlorococcus marinus (strain MIT 9301), this protein is Isoleucine--tRNA ligase.